A 498-amino-acid polypeptide reads, in one-letter code: Pre-glycoprotein polyprotein GP complex (498 aa).

A lipid anchor (N-myristoyl glycine; by host) is attached at glycine 2. The Extracellular portion of the chain corresponds to 2 to 17 (GQIVTMFEALPHIIDE). Residues 18–33 (VINIVIIVLIIITSIK) traverse the membrane as a helical segment. The Cytoplasmic portion of the chain corresponds to 34-58 (AVYNFATCGILALVSFLFLAGRSCG). Position 57 (cysteine 57) interacts with Zn(2+). Topologically, residues 59–438 (MYGLNGPDIY…QGSTPLALMD (380 aa)) are extracellular. Asparagine 85, asparagine 95, asparagine 114, asparagine 124, and asparagine 171 each carry an N-linked (GlcNAc...) asparagine; by host glycan. 6 cysteine pairs are disulfide-bonded: cysteine 92–cysteine 239, cysteine 123–cysteine 160, cysteine 184–cysteine 220, cysteine 285–cysteine 298, cysteine 307–cysteine 316, and cysteine 370–cysteine 391. Residue asparagine 232 is glycosylated (N-linked (GlcNAc...) asparagine; by host). 3 N-linked (GlcNAc...) asparagine; by host glycosylation sites follow: asparagine 371, asparagine 396, and asparagine 401. A helical membrane pass occupies residues 439-459 (LLMFSTSAYLISIFLHFVRIP). The Cytoplasmic portion of the chain corresponds to 460–498 (THRHIKGGSCPKPHRLTNKGICSCGAFKVPGVKTIWKRR). The Zn(2+) site is built by histidine 461, histidine 463, cysteine 469, histidine 473, cysteine 481, and cysteine 483.

Belongs to the arenaviridae GPC protein family. Interacts with glycoprotein G2. Part of the GP complex (GP-C) together with glycoprotein G1 and glycoprotein G2. The GP-complex interacts with protein Z, which interacts with ribonucleocapsid; these interactions may induce virion budding. In terms of assembly, homotrimer; disulfide-linked. In pre-fusion state, G1 homotrimers bind G2 homotrimers via ionic interactions. Part of the GP complex (GP-C) together with glycoprotein G2 and the stable signal peptide. Interacts with the primary host receptor DAG1 on the cell surface. The GP-complex interacts with protein Z, which interacts with ribonucleocapsid; these interactions may induce virion budding. As to quaternary structure, homotrimer. Interacts with the stable signal peptide. In pre-fusion state, G2 homotrimers bind G1 homotrimers via ionic interactions. Part of the GP complex (GP-C) together with glycoprotein G1 and the stable signal peptide. Acidification in the endosome triggers rearrangements, which ultimately leads to a 6 helix bundle formed by the two heptad repeat domains (HR1 and HR2) in post-fusion state. The GP-complex interacts with protein Z, which interacts with ribonucleocapsid; these interactions may induce virion budding. Specific enzymatic cleavages in vivo yield mature proteins. GP-C polyprotein is cleaved in the endoplasmic reticulum by the host protease MBTPS1. Only cleaved glycoprotein is incorporated into virions. In terms of processing, the SSP remains stably associated with the GP complex following cleavage by signal peptidase and plays crucial roles in the trafficking of GP through the secretory pathway. Post-translationally, myristoylation is necessary for GP2-mediated fusion activity.

Its subcellular location is the virion membrane. The protein resides in the host endoplasmic reticulum membrane. It is found in the host Golgi apparatus membrane. It localises to the host cell membrane. Its function is as follows. Functions as a cleaved signal peptide that is retained as the third component of the GP complex (GP-C). Helps to stabilize the spike complex in its native conformation. The SSP is required for efficient glycoprotein expression, post-translational maturation cleavage of G1 and G2, glycoprotein transport to the cell surface plasma membrane, formation of infectious virus particles, and acid pH-dependent glycoprotein-mediated cell fusion. Forms the virion spikes together with glycoprotein G2. The glycoprotein spike trimers are connected to the underlying matrix. Interacts with the host receptor. Mediates virus attachment to the host primary receptor alpha-dystroglycan DAG1 (alpha-DG) at the cell surface. Down-modulates host DAG1. In terms of biological role, forms the virion spikes together with glycoprotein G1. The glycoprotein spike trimers are connected to the underlying matrix. Class I viral fusion protein that directs fusion of viral and host endosomal membranes, leading to delivery of the nucleocapsid into the cytoplasm. Membrane fusion is mediated by irreversible conformational changes induced by acidification. The polypeptide is Pre-glycoprotein polyprotein GP complex (Homo sapiens (Human)).